A 92-amino-acid chain; its full sequence is Probable Fe(2+)-trafficking protein (92 aa).

It belongs to the Fe(2+)-trafficking protein family.

Could be a mediator in iron transactions between iron acquisition and iron-requiring processes, such as synthesis and/or repair of Fe-S clusters in biosynthetic enzymes. This is Probable Fe(2+)-trafficking protein from Shewanella frigidimarina (strain NCIMB 400).